We begin with the raw amino-acid sequence, 221 residues long: Probable transaldolase (221 aa).

Catalysis depends on Lys-83, which acts as the Schiff-base intermediate with substrate.

This sequence belongs to the transaldolase family. Type 3B subfamily.

It is found in the cytoplasm. It carries out the reaction D-sedoheptulose 7-phosphate + D-glyceraldehyde 3-phosphate = D-erythrose 4-phosphate + beta-D-fructose 6-phosphate. It participates in carbohydrate degradation; pentose phosphate pathway; D-glyceraldehyde 3-phosphate and beta-D-fructose 6-phosphate from D-ribose 5-phosphate and D-xylulose 5-phosphate (non-oxidative stage): step 2/3. Functionally, transaldolase is important for the balance of metabolites in the pentose-phosphate pathway. The polypeptide is Probable transaldolase (Herpetosiphon aurantiacus (strain ATCC 23779 / DSM 785 / 114-95)).